The following is a 185-amino-acid chain: HTH-type transcriptional regulator Hpr (185 aa).

The 145-residue stretch at 13-157 (AMIFSQRIAQ…LIAILRNIYG (145 aa)) folds into the HTH marR-type domain. Residues 63 to 86 (ISEIAKFGVMHVSTAFNFSKKLEE) constitute a DNA-binding region (H-T-H motif).

As to quaternary structure, homodimer.

Its function is as follows. Negative regulator of protease production and sporulation. The sequence is that of HTH-type transcriptional regulator Hpr from Bacillus mycoides (strain KBAB4) (Bacillus weihenstephanensis).